Reading from the N-terminus, the 275-residue chain is Transmembrane protein 202 (275 aa).

The next 4 helical transmembrane spans lie at 60-80 (SGFSVLLLACTSPLNLVQFLV), 116-136 (ALFLISILFMLISLGLLLSSC), 151-171 (VSMLSFCSAVSLLLCLNLFLA), and 193-213 (WCSEVLYICVGIISFLNFITF).

The protein resides in the membrane. This chain is Transmembrane protein 202 (Tmem202), found in Mus musculus (Mouse).